Here is a 424-residue protein sequence, read N- to C-terminus: Histidine--tRNA ligase (424 aa).

This sequence belongs to the class-II aminoacyl-tRNA synthetase family. Homodimer.

Its subcellular location is the cytoplasm. It carries out the reaction tRNA(His) + L-histidine + ATP = L-histidyl-tRNA(His) + AMP + diphosphate + H(+). In Sodalis glossinidius (strain morsitans), this protein is Histidine--tRNA ligase.